The following is a 362-amino-acid chain: Forkhead box protein F (362 aa).

Residues 19–70 form a disordered region; it reads LDSTAPNNSHRTIKAENYFNEDEEDYNENSHEDSEDSKEDSDGQGCRSRKRK. The span at 37-57 shows a compositional bias: acidic residues; it reads FNEDEEDYNENSHEDSEDSKE. The segment at residues 72–169 is a DNA-binding region (fork-head); that stretch reads KPPFSYIALI…EENGFRRRPR (98 aa).

It localises to the nucleus. Functionally, transcription factor that is required for cell fate of coelomocytes which are non-muscle mesodermal cells. Acts in concert with, and by activating expression of, the homeodomain gene ceh-34. Binds to the sequence motif 5'-ATAAA[T/C]A-3'. The protein is Forkhead box protein F of Caenorhabditis elegans.